A 149-amino-acid chain; its full sequence is Nucleoside diphosphate kinase (149 aa).

Positions 9, 57, 85, 91, 102, and 112 each coordinate ATP. Histidine 115 serves as the catalytic Pros-phosphohistidine intermediate.

Belongs to the NDK family. In terms of assembly, homotetramer. The cofactor is Mg(2+).

The protein resides in the cytoplasm. It catalyses the reaction a 2'-deoxyribonucleoside 5'-diphosphate + ATP = a 2'-deoxyribonucleoside 5'-triphosphate + ADP. It carries out the reaction a ribonucleoside 5'-diphosphate + ATP = a ribonucleoside 5'-triphosphate + ADP. Major role in the synthesis of nucleoside triphosphates other than ATP. The ATP gamma phosphate is transferred to the NDP beta phosphate via a ping-pong mechanism, using a phosphorylated active-site intermediate. The chain is Nucleoside diphosphate kinase from Carboxydothermus hydrogenoformans (strain ATCC BAA-161 / DSM 6008 / Z-2901).